Consider the following 447-residue polypeptide: Pup--protein ligase 2 (447 aa).

Glu4 serves as a coordination point for Mg(2+). An ATP-binding site is contributed by Arg48. Tyr50 lines the Mg(2+) pocket. The Proton acceptor role is filled by Asp52. A Mg(2+)-binding site is contributed by Glu58. Positions 61 and 414 each coordinate ATP.

Belongs to the Pup ligase/Pup deamidase family. Pup-conjugating enzyme subfamily.

It carries out the reaction ATP + [prokaryotic ubiquitin-like protein]-L-glutamate + [protein]-L-lysine = ADP + phosphate + N(6)-([prokaryotic ubiquitin-like protein]-gamma-L-glutamyl)-[protein]-L-lysine.. Its pathway is protein degradation; proteasomal Pup-dependent pathway. It functions in the pathway protein modification; protein pupylation. In terms of biological role, catalyzes the covalent attachment of the prokaryotic ubiquitin-like protein modifier Pup to the proteasomal substrate proteins, thereby targeting them for proteasomal degradation. This tagging system is termed pupylation. The ligation reaction involves the side-chain carboxylate of the C-terminal glutamate of Pup and the side-chain amino group of a substrate lysine. The protein is Pup--protein ligase 2 of Rhodococcus erythropolis (Arthrobacter picolinophilus).